The primary structure comprises 502 residues: Lysine--tRNA ligase (502 aa).

Residues Glu-398 and Glu-405 each contribute to the Mg(2+) site.

It belongs to the class-II aminoacyl-tRNA synthetase family. In terms of assembly, homodimer. Mg(2+) is required as a cofactor.

It is found in the cytoplasm. It carries out the reaction tRNA(Lys) + L-lysine + ATP = L-lysyl-tRNA(Lys) + AMP + diphosphate. The protein is Lysine--tRNA ligase of Thermotoga sp. (strain RQ2).